The following is a 470-amino-acid chain: Glutamate--tRNA ligase (470 aa).

Positions 9–19 (PSPTGYLHVGG) match the 'HIGH' region motif. The short motif at 236 to 240 (RLSKR) is the 'KMSKS' region element. Lysine 239 is a binding site for ATP.

Belongs to the class-I aminoacyl-tRNA synthetase family. Glutamate--tRNA ligase type 1 subfamily. As to quaternary structure, monomer.

The protein resides in the cytoplasm. It carries out the reaction tRNA(Glu) + L-glutamate + ATP = L-glutamyl-tRNA(Glu) + AMP + diphosphate. Catalyzes the attachment of glutamate to tRNA(Glu) in a two-step reaction: glutamate is first activated by ATP to form Glu-AMP and then transferred to the acceptor end of tRNA(Glu). This chain is Glutamate--tRNA ligase, found in Colwellia psychrerythraea (strain 34H / ATCC BAA-681) (Vibrio psychroerythus).